The sequence spans 417 residues: Phosphoglycerate kinase 2 (417 aa).

N-acetylserine is present on Ser2. 2 positions are modified to phosphoserine: Ser2 and Ser4. At Lys11 the chain carries N6-acetyllysine. (2R)-3-phosphoglycerate is bound by residues Val23, Asp24, Phe25, Asn26, Gln38, and Arg39. At Lys48 the chain carries N6-acetyllysine. Ser62, His63, Gly65, and Arg66 together coordinate (2R)-3-phosphoglycerate. An N6-acetyllysine mark is found at Lys75, Lys86, and Lys97. Positions 122 and 123 each coordinate (2R)-3-phosphoglycerate. 2 positions are modified to N6-acetyllysine: Lys131 and Lys146. (2R)-3-phosphoglycerate contacts are provided by His170 and Arg171. Tyr196 carries the phosphotyrosine modification. Position 199 is an N6-acetyllysine (Lys199). Gly214 contributes to the ADP binding site. Gly214 is a CDP binding site. Residues Ala215 and Lys216 each contribute to the AMP site. Ala215 provides a ligand contact to ATP. Residue Ala215 coordinates Mg(2+). 2 residues coordinate Mg(2+): Ala218 and Asp219. Residue Asp219 coordinates CDP. Residue Lys220 coordinates AMP. Lys220 contacts ATP. Gly238 contacts ADP. Gly238 is a CDP binding site. Gly239 lines the AMP pocket. Gly239 contacts ATP. 2 positions are modified to N6-acetyllysine: Lys267 and Lys291. An AMP-binding site is contributed by Gly313. Position 313 (Gly313) interacts with ATP. Residues Gly338 and Phe343 each coordinate CDP. Phe343 serves as a coordination point for ADP. Glu344 contributes to the AMP binding site. Glu344, Asp375, and Thr376 together coordinate ATP. Asp375 is a Mg(2+) binding site.

Belongs to the phosphoglycerate kinase family. Monomer. It depends on Mg(2+) as a cofactor.

Its subcellular location is the cytoplasm. It carries out the reaction (2R)-3-phosphoglycerate + ATP = (2R)-3-phospho-glyceroyl phosphate + ADP. The protein operates within carbohydrate degradation; glycolysis; pyruvate from D-glyceraldehyde 3-phosphate: step 2/5. Functionally, essential for sperm motility and male fertility but is not required for the completion of spermatogenesis. This is Phosphoglycerate kinase 2 (PGK2) from Macaca fascicularis (Crab-eating macaque).